Reading from the N-terminus, the 340-residue chain is N-acetyl-gamma-glutamyl-phosphate reductase (340 aa).

C147 is an active-site residue.

Belongs to the NAGSA dehydrogenase family. Type 1 subfamily.

It localises to the cytoplasm. The catalysed reaction is N-acetyl-L-glutamate 5-semialdehyde + phosphate + NADP(+) = N-acetyl-L-glutamyl 5-phosphate + NADPH + H(+). It participates in amino-acid biosynthesis; L-arginine biosynthesis; N(2)-acetyl-L-ornithine from L-glutamate: step 3/4. In terms of biological role, catalyzes the NADPH-dependent reduction of N-acetyl-5-glutamyl phosphate to yield N-acetyl-L-glutamate 5-semialdehyde. The chain is N-acetyl-gamma-glutamyl-phosphate reductase from Lactococcus lactis subsp. lactis (strain IL1403) (Streptococcus lactis).